The following is a 198-amino-acid chain: Nucleoside triphosphate pyrophosphatase (198 aa).

Residue Asp-74 is the Proton acceptor of the active site.

This sequence belongs to the Maf family. A divalent metal cation serves as cofactor.

It is found in the cytoplasm. The catalysed reaction is a ribonucleoside 5'-triphosphate + H2O = a ribonucleoside 5'-phosphate + diphosphate + H(+). The enzyme catalyses a 2'-deoxyribonucleoside 5'-triphosphate + H2O = a 2'-deoxyribonucleoside 5'-phosphate + diphosphate + H(+). Nucleoside triphosphate pyrophosphatase. May have a dual role in cell division arrest and in preventing the incorporation of modified nucleotides into cellular nucleic acids. The sequence is that of Nucleoside triphosphate pyrophosphatase from Sphingopyxis alaskensis (strain DSM 13593 / LMG 18877 / RB2256) (Sphingomonas alaskensis).